A 704-amino-acid chain; its full sequence is CAP-Gly domain-containing linker protein 4 (704 aa).

3 ANK repeats span residues 65–101 (TSVS…NVND), 149–180 (TNMN…DVDA), and 186–215 (NFGT…NPAF). The CAP-Gly 1 domain maps to 303 to 345 (GTTEFASGQWAGIELDEPEGKNNGSVGRVQYFKCAPKYGIFAP). The segment at 353–479 (KDGRKTTTHT…SATSAANNSH (127 aa)) is disordered. 3 stretches are compositionally biased toward low complexity: residues 360 to 371 (THTPSTRATPHA), 423 to 432 (SMSSSSSSSS), and 440 to 461 (PKKL…SLPS). The CAP-Gly 2 domain occupies 504 to 546 (GTTNFAPGYWYGIELEKPHGKNDGSVGGVQYFSCSPRYGIFAP). Serine 556 and serine 608 each carry phosphoserine. One can recognise a CAP-Gly 3 domain in the interval 643–685 (GPTDFASGIWLGLELRSAKGKNDGAVGDKRYFTCKPNYGVLVR).

In Mus musculus (Mouse), this protein is CAP-Gly domain-containing linker protein 4 (Clip4).